The primary structure comprises 430 residues: Pre-B-cell leukemia transcription factor 2 (430 aa).

The disordered stretch occupies residues 1–52 (MDERLLGPPPPGGGRGGLGLVSGEPGGPGEPPGGGDPGGGSGGVPGGRGKQD). Residues 13-48 (GGRGGLGLVSGEPGGPGEPPGGGDPGGGSGGVPGGR) are compositionally biased toward gly residues. Residues 48-243 (RGKQDIGDIL…VMILRSRFLD (196 aa)) enclose the PBC domain. The PBC-A stretch occupies residues 55 to 134 (DILQQIMTIT…EGVAGPEKGG (80 aa)). Phosphoserine occurs at positions 136, 151, and 159. Residues 137–243 (AAAAAAAAAS…VMILRSRFLD (107 aa)) form a PBC-B region. A DNA-binding region (homeobox; TALE-type) is located at residues 244 to 306 (ARRKRRNFSK…NKRIRYKKNI (63 aa)). Disordered stretches follow at residues 326 to 347 (QGGH…GGSF) and 378 to 430 (SMGP…DTSN). The residue at position 330 (serine 330) is a Phosphoserine. Over residues 380 to 392 (GPGGYGDNLGGGQ) the composition is skewed to gly residues. Serine 395 carries the phosphoserine modification. The span at 403-418 (GSWQEAVTPSSVTSPT) shows a compositional bias: polar residues.

The protein belongs to the TALE/PBX homeobox family. Forms heterodimers with MEIS1 and heterotrimers with MEIS1 and HOXA9. Interacts with PBXIP1. As to expression, ubiquitously expressed.

It localises to the nucleus. In terms of biological role, transcriptional activator that binds the sequence 5'-ATCAATCAA-3'. Activates transcription of PF4 in complex with MEIS1. The polypeptide is Pre-B-cell leukemia transcription factor 2 (PBX2) (Homo sapiens (Human)).